The chain runs to 156 residues: Snaclec A1 (156 aa).

The N-terminal stretch at 1–23 is a signal peptide; sequence MGRSISVSFGLLVVFLSLSGTGA. 3 disulfide bridges follow: Cys27–Cys38, Cys55–Cys154, and Cys129–Cys146. Residues 34–155 enclose the C-type lectin domain; it reads HEGHCYKVFN…CGQPYRFTCE (122 aa).

This sequence belongs to the snaclec family. Heterodimer; disulfide-linked. Expressed by the venom gland.

The protein resides in the secreted. Functionally, interferes with one step of hemostasis (modulation of platelet aggregation, or coagulation cascade, for example). This Macrovipera lebetinus (Levantine viper) protein is Snaclec A1.